The sequence spans 406 residues: Peptide chain release factor PrfB3, chloroplastic (406 aa).

The protein belongs to the prokaryotic/mitochondrial release factor family. In terms of assembly, interacts with PDE338.

The protein localises to the plastid. It is found in the chloroplast stroma. Its subcellular location is the chloroplast. In terms of biological role, involved in the light- and stress-dependent regulation of stability of 3' processed petB transcripts, thus regulating cytochrome b6 accumulation, a rate-limiting step in photosynthetic electron transport. May be recruited to specifically protect petB transcripts against 3'-5' exonucleolytic attack by masking the 3' ends. Does not function as release factor. This is Peptide chain release factor PrfB3, chloroplastic from Arabidopsis thaliana (Mouse-ear cress).